The primary structure comprises 501 residues: Pyruvate dehydrogenase protein X component, mitochondrial (501 aa).

The transit peptide at 1 to 53 directs the protein to the mitochondrion; the sequence is MAASWRLHCNQPLLRYLLGFSSRRSLGLAQGAAAWPVDRGASWRWFHSTQLLQ. Positions 56–132 constitute a Lipoyl-binding domain; that stretch reads PIKVLMPSLS…QLGSLIALMV (77 aa). Lys97 is subject to N6-lipoyllysine. The disordered stretch occupies residues 145–176; the sequence is KDVSAPPPVSKPPAPTQPSPQPQIPCPARKEH. The segment covering 149–169 has biased composition (pro residues); that stretch reads APPPVSKPPAPTQPSPQPQIP. A Peripheral subunit-binding (PSBD) domain is found at 183–220; the sequence is RLSPAARNILEKHSLDASQGTATGPRGIFTKEDALKLV. N6-acetyllysine is present on Lys194. Ser196 is subject to Phosphoserine. Residues 228 to 256 form a disordered region; it reads ITESRPASAPPPSLSASVPPQATAGPSYP. Lys394 is subject to N6-succinyllysine.

It belongs to the 2-oxoacid dehydrogenase family. In terms of assembly, part of the inner core of the multimeric pyruvate dehydrogenase complex that is composed of about 48 DLAT and 12 PDHX molecules. This core binds multiple copies of pyruvate dehydrogenase (subunits PDH1A and PDHB, E1), dihydrolipoamide acetyltransferase (DLAT, E2) and lipoamide dehydrogenase (DLD, E3). Interacts with SIRT4. Interacts with DLD. Post-translationally, delipoylated at Lys-97 by SIRT4, delipoylation decreases the PHD complex activity.

It is found in the mitochondrion matrix. Its function is as follows. Required for anchoring dihydrolipoamide dehydrogenase (E3) to the dihydrolipoamide transacetylase (E2) core of the pyruvate dehydrogenase complexes of eukaryotes. This specific binding is essential for a functional PDH complex. The polypeptide is Pyruvate dehydrogenase protein X component, mitochondrial (Pdhx) (Mus musculus (Mouse)).